Reading from the N-terminus, the 277-residue chain is 3-methyl-2-oxobutanoate hydroxymethyltransferase (277 aa).

Positions 43 and 82 each coordinate Mg(2+). 3-methyl-2-oxobutanoate is bound by residues 43-44 (DS), Asp-82, and Lys-112. Mg(2+) is bound at residue Glu-114. Glu-181 (proton acceptor) is an active-site residue.

This sequence belongs to the PanB family. As to quaternary structure, homodecamer; pentamer of dimers. The cofactor is Mg(2+).

It is found in the cytoplasm. The enzyme catalyses 3-methyl-2-oxobutanoate + (6R)-5,10-methylene-5,6,7,8-tetrahydrofolate + H2O = 2-dehydropantoate + (6S)-5,6,7,8-tetrahydrofolate. It participates in cofactor biosynthesis; (R)-pantothenate biosynthesis; (R)-pantoate from 3-methyl-2-oxobutanoate: step 1/2. Functionally, catalyzes the reversible reaction in which hydroxymethyl group from 5,10-methylenetetrahydrofolate is transferred onto alpha-ketoisovalerate to form ketopantoate. The chain is 3-methyl-2-oxobutanoate hydroxymethyltransferase from Listeria monocytogenes serotype 4b (strain CLIP80459).